Reading from the N-terminus, the 457-residue chain is Methanethiol oxidase (457 aa).

It belongs to the selenium-binding protein family.

The protein resides in the nucleus. It localises to the cytoplasm. The protein localises to the cytosol. It is found in the membrane. The catalysed reaction is methanethiol + O2 + H2O = hydrogen sulfide + formaldehyde + H2O2 + H(+). Its pathway is organosulfur degradation. Functionally, catalyzes the oxidation of methanethiol, an organosulfur compound known to be produced in substantial amounts by gut bacteria. Selenium-binding protein which may be involved in the sensing of reactive xenobiotics in the cytoplasm. May be involved in intra-Golgi protein transport. The protein is Methanethiol oxidase (selenbp1) of Danio rerio (Zebrafish).